A 217-amino-acid polypeptide reads, in one-letter code: Thiamine-phosphate synthase (217 aa).

Residues 39–43 (QLRRK) and asparagine 71 contribute to the 4-amino-2-methyl-5-(diphosphooxymethyl)pyrimidine site. Mg(2+)-binding residues include aspartate 72 and aspartate 91. Serine 110 lines the 4-amino-2-methyl-5-(diphosphooxymethyl)pyrimidine pocket. 137–139 (SPT) is a 2-[(2R,5Z)-2-carboxy-4-methylthiazol-5(2H)-ylidene]ethyl phosphate binding site. Lysine 140 serves as a coordination point for 4-amino-2-methyl-5-(diphosphooxymethyl)pyrimidine. Residues glycine 173 and 193 to 194 (IS) each bind 2-[(2R,5Z)-2-carboxy-4-methylthiazol-5(2H)-ylidene]ethyl phosphate.

Belongs to the thiamine-phosphate synthase family. Mg(2+) is required as a cofactor.

The enzyme catalyses 2-[(2R,5Z)-2-carboxy-4-methylthiazol-5(2H)-ylidene]ethyl phosphate + 4-amino-2-methyl-5-(diphosphooxymethyl)pyrimidine + 2 H(+) = thiamine phosphate + CO2 + diphosphate. The catalysed reaction is 2-(2-carboxy-4-methylthiazol-5-yl)ethyl phosphate + 4-amino-2-methyl-5-(diphosphooxymethyl)pyrimidine + 2 H(+) = thiamine phosphate + CO2 + diphosphate. It catalyses the reaction 4-methyl-5-(2-phosphooxyethyl)-thiazole + 4-amino-2-methyl-5-(diphosphooxymethyl)pyrimidine + H(+) = thiamine phosphate + diphosphate. Its pathway is cofactor biosynthesis; thiamine diphosphate biosynthesis; thiamine phosphate from 4-amino-2-methyl-5-diphosphomethylpyrimidine and 4-methyl-5-(2-phosphoethyl)-thiazole: step 1/1. In terms of biological role, condenses 4-methyl-5-(beta-hydroxyethyl)thiazole monophosphate (THZ-P) and 2-methyl-4-amino-5-hydroxymethyl pyrimidine pyrophosphate (HMP-PP) to form thiamine monophosphate (TMP). The chain is Thiamine-phosphate synthase from Bordetella bronchiseptica (strain ATCC BAA-588 / NCTC 13252 / RB50) (Alcaligenes bronchisepticus).